A 273-amino-acid chain; its full sequence is Putative pyruvate, phosphate dikinase regulatory protein (273 aa).

153-160 (GISRTSKT) contributes to the ADP binding site.

It belongs to the pyruvate, phosphate/water dikinase regulatory protein family. PDRP subfamily.

It carries out the reaction N(tele)-phospho-L-histidyl/L-threonyl-[pyruvate, phosphate dikinase] + ADP = N(tele)-phospho-L-histidyl/O-phospho-L-threonyl-[pyruvate, phosphate dikinase] + AMP + H(+). The catalysed reaction is N(tele)-phospho-L-histidyl/O-phospho-L-threonyl-[pyruvate, phosphate dikinase] + phosphate + H(+) = N(tele)-phospho-L-histidyl/L-threonyl-[pyruvate, phosphate dikinase] + diphosphate. In terms of biological role, bifunctional serine/threonine kinase and phosphorylase involved in the regulation of the pyruvate, phosphate dikinase (PPDK) by catalyzing its phosphorylation/dephosphorylation. The sequence is that of Putative pyruvate, phosphate dikinase regulatory protein from Agrobacterium fabrum (strain C58 / ATCC 33970) (Agrobacterium tumefaciens (strain C58)).